The primary structure comprises 415 residues: Fructose-like permease IIC component 1 (415 aa).

The Cytoplasmic segment spans residues 1–46 (MAIKKRSATVVPGASGAAAAVKNPQASKTSFWGELPQHVMSGISRM). The PTS EIIC type-2 domain occupies 35 to 410 (LPQHVMSGIS…RLMMFRKGKL (376 aa)). A helical transmembrane segment spans residues 47 to 67 (VPTLIMGGVILAFSQLIAYSW). Over 68-101 (LKIPAEIGIMDALNSGKFSGFDLSLLKFAWLSQS) the chain is Periplasmic. Residues 102 to 122 (FGGVLFGFAIPMFAAFVANSI) traverse the membrane as a helical segment. Residues 123–126 (GGKL) lie on the Cytoplasmic side of the membrane. Residues 127–147 (AFPAGFIGGLMSTQPTQLLNF) traverse the membrane as a helical segment. At 148 to 157 (DPSTMQWATS) the chain is on the periplasmic side. Residues 158–178 (SPVPSTFIGALIISIVAGYLV) form a helical membrane-spanning segment. Residues 179-197 (KWMNQKIQLPDFLLAFKTT) are Cytoplasmic-facing. Residues 198–218 (FLLPILSAIFVMLAMYYVITP) form a helical membrane-spanning segment. The Periplasmic segment spans residues 219–237 (FGGWINGGIRTVLTAAGEK). A helical membrane pass occupies residues 238–258 (GALMYAMGIAAATAIDLGGPI). At 259-276 (NKAAGFVAFSFTTDHVLP) the chain is on the cytoplasmic side. A helical transmembrane segment spans residues 277–297 (VTARSIAIVIPPIGLGLATII). Residues 298-318 (DRRLTGKRLFNAQLYPQGKTA) are Periplasmic-facing. The chain crosses the membrane as a helical span at residues 319 to 339 (MFLAFMGISEGAIPFALESPI). Residues 340-341 (TA) are Cytoplasmic-facing. The chain crosses the membrane as a helical span at residues 342–362 (IPSYMVGAIVGSTAAVWLGAV). Topologically, residues 363 to 378 (QWFPESAIWAWPLVTN) are periplasmic. The helical transmembrane segment at 379 to 399 (LGVYMAGIALGAVITALMVVF) threads the bilayer. Topologically, residues 400–415 (LRLMMFRKGKLLIDSL) are cytoplasmic.

It is found in the cell inner membrane. In terms of biological role, the phosphoenolpyruvate-dependent sugar phosphotransferase system (PTS), a major carbohydrate active -transport system, catalyzes the phosphorylation of incoming sugar substrates concomitant with their translocation across the cell membrane. The chain is Fructose-like permease IIC component 1 (fryC) from Escherichia coli (strain K12).